A 206-amino-acid polypeptide reads, in one-letter code: Pyridoxine/pyridoxamine 5'-phosphate oxidase (206 aa).

Residues 53–58 (RMVLLK), 68–69 (YT), Lys75, and Gln97 each bind FMN. A substrate-binding site is contributed by Lys58. 3 residues coordinate substrate: Tyr115, Arg119, and Ser123. FMN-binding positions include 132 to 133 (QS) and Trp177. 183–185 (RLH) lines the substrate pocket. FMN is bound at residue Arg187.

It belongs to the pyridoxamine 5'-phosphate oxidase family. In terms of assembly, homodimer. FMN is required as a cofactor.

It carries out the reaction pyridoxamine 5'-phosphate + O2 + H2O = pyridoxal 5'-phosphate + H2O2 + NH4(+). It catalyses the reaction pyridoxine 5'-phosphate + O2 = pyridoxal 5'-phosphate + H2O2. It participates in cofactor metabolism; pyridoxal 5'-phosphate salvage; pyridoxal 5'-phosphate from pyridoxamine 5'-phosphate: step 1/1. The protein operates within cofactor metabolism; pyridoxal 5'-phosphate salvage; pyridoxal 5'-phosphate from pyridoxine 5'-phosphate: step 1/1. Catalyzes the oxidation of either pyridoxine 5'-phosphate (PNP) or pyridoxamine 5'-phosphate (PMP) into pyridoxal 5'-phosphate (PLP). This Sinorhizobium fredii (strain NBRC 101917 / NGR234) protein is Pyridoxine/pyridoxamine 5'-phosphate oxidase.